The chain runs to 648 residues: Macrolide export ATP-binding/permease protein MacB (648 aa).

Positions 5-243 constitute an ABC transporter domain; it reads LELKDIRRSY…AGGTEPVVNT (239 aa). 41-48 is an ATP binding site; the sequence is GASGSGKS. 4 consecutive transmembrane segments (helical) span residues 273-293, 523-543, 576-596, and 600-620; these read LLTMLGIIIGIASVVSIVVVG, LFLTLVAVISLVVGGIGVMNI, AVLVCLVGGALGITLSLLIAF, and LFLPGWEIGFSPLALLLAFLC.

It belongs to the ABC transporter superfamily. Macrolide exporter (TC 3.A.1.122) family. Homodimer. Part of the tripartite efflux system MacAB-TolC, which is composed of an inner membrane transporter, MacB, a periplasmic membrane fusion protein, MacA, and an outer membrane component, TolC. The complex forms a large protein conduit and can translocate molecules across both the inner and outer membranes. Interacts with MacA.

The protein localises to the cell inner membrane. Its function is as follows. Part of the tripartite efflux system MacAB-TolC. MacB is a non-canonical ABC transporter that contains transmembrane domains (TMD), which form a pore in the inner membrane, and an ATP-binding domain (NBD), which is responsible for energy generation. Confers resistance against macrolides. In Shigella boydii serotype 4 (strain Sb227), this protein is Macrolide export ATP-binding/permease protein MacB.